The sequence spans 352 residues: Putative conjugal transfer protein MT3759 (352 aa).

Gly-160–Thr-167 provides a ligand contact to ATP.

This sequence belongs to the GSP E family.

It is found in the cytoplasm. This Mycobacterium tuberculosis (strain CDC 1551 / Oshkosh) protein is Putative conjugal transfer protein MT3759.